The primary structure comprises 443 residues: tRNA-2-methylthio-N(6)-dimethylallyladenosine synthase (443 aa).

Residues 3 to 120 (SKLYIRTFGC…LPDLIDARRR (118 aa)) form the MTTase N-terminal domain. [4Fe-4S] cluster-binding residues include C12, C49, C83, C157, C161, and C164. Positions 143–375 (RTEGSTAFVS…QEKIQLNAQA (233 aa)) constitute a Radical SAM core domain. In terms of domain architecture, TRAM spans 378-441 (QGMVDTVQRI…SHTLRGEISD (64 aa)).

The protein belongs to the methylthiotransferase family. MiaB subfamily. As to quaternary structure, monomer. [4Fe-4S] cluster is required as a cofactor.

It localises to the cytoplasm. The catalysed reaction is N(6)-dimethylallyladenosine(37) in tRNA + (sulfur carrier)-SH + AH2 + 2 S-adenosyl-L-methionine = 2-methylsulfanyl-N(6)-dimethylallyladenosine(37) in tRNA + (sulfur carrier)-H + 5'-deoxyadenosine + L-methionine + A + S-adenosyl-L-homocysteine + 2 H(+). In terms of biological role, catalyzes the methylthiolation of N6-(dimethylallyl)adenosine (i(6)A), leading to the formation of 2-methylthio-N6-(dimethylallyl)adenosine (ms(2)i(6)A) at position 37 in tRNAs that read codons beginning with uridine. The protein is tRNA-2-methylthio-N(6)-dimethylallyladenosine synthase of Nitrosomonas europaea (strain ATCC 19718 / CIP 103999 / KCTC 2705 / NBRC 14298).